The following is a 573-amino-acid chain: Delta 8-(E)-sphingolipid desaturase (573 aa).

The Cytochrome b5 heme-binding domain occupies 2 to 77; sequence SRVLSRRDIA…FKIWKIGRID (76 aa). 2 residues coordinate heme: His-37 and His-60. Residues 228–248 form a helical membrane-spanning segment; it reads LFGISFYLLSLKWFAISAICL. The Histidine box-1 signature appears at 260 to 264; the sequence is HDAGH. A helical membrane pass occupies residues 273–293; sequence VDNIIGMTVASWIGGLSLGWW. The Histidine box-2 motif lies at 297-301; it reads HDVHH. 3 consecutive transmembrane segments (helical) span residues 353–372, 393–413, and 422–442; these read YLYY…LSWM, LAEL…KQMP, and VMIS…SHFA. A Histidine box-3 motif is present at residues 481 to 485; the sequence is QVIHH.

It belongs to the fatty acid desaturase type 1 family.

The protein resides in the membrane. The enzyme catalyses an N-acylsphing-4-enine + 2 Fe(II)-[cytochrome b5] + O2 + 2 H(+) = a (4E,8E)-4-sphinga-4,8-dienine ceramide + 2 Fe(III)-[cytochrome b5] + 2 H2O. It participates in lipid metabolism; sphingolipid metabolism. Delta(8)-fatty-acid desaturase which introduces a double bond at the 8-position in the long-chain base (LCB) of ceramides. Required for the formation of the di-unsaturated sphingoid base (E,E)-sphinga-4,8-dienine during glucosylceramide (GluCer) biosynthesis. This is Delta 8-(E)-sphingolipid desaturase from Kluyveromyces lactis (Yeast).